The chain runs to 1072 residues: DNA-directed RNA polymerase subunit beta (1072 aa).

It belongs to the RNA polymerase beta chain family. In terms of assembly, in plastids the minimal PEP RNA polymerase catalytic core is composed of four subunits: alpha, beta, beta', and beta''. When a (nuclear-encoded) sigma factor is associated with the core the holoenzyme is formed, which can initiate transcription.

It is found in the plastid. Its subcellular location is the chloroplast. The catalysed reaction is RNA(n) + a ribonucleoside 5'-triphosphate = RNA(n+1) + diphosphate. Its function is as follows. DNA-dependent RNA polymerase catalyzes the transcription of DNA into RNA using the four ribonucleoside triphosphates as substrates. This Nasturtium officinale (Watercress) protein is DNA-directed RNA polymerase subunit beta.